Consider the following 320-residue polypeptide: Cytochrome f (320 aa).

An N-terminal signal peptide occupies residues 1–35 (MQTRNTFSWIKEEITRSISVSLMIYIITGASISNA). Heme is bound by residues tyrosine 36, cysteine 56, cysteine 59, and histidine 60. Residues 286–306 (VQGLLFFLASIVFAQIFLVLK) traverse the membrane as a helical segment.

This sequence belongs to the cytochrome f family. As to quaternary structure, the 4 large subunits of the cytochrome b6-f complex are cytochrome b6, subunit IV (17 kDa polypeptide, petD), cytochrome f and the Rieske protein, while the 4 small subunits are PetG, PetL, PetM and PetN. The complex functions as a dimer. The cofactor is heme.

Its subcellular location is the plastid. It localises to the chloroplast thylakoid membrane. Functionally, component of the cytochrome b6-f complex, which mediates electron transfer between photosystem II (PSII) and photosystem I (PSI), cyclic electron flow around PSI, and state transitions. The sequence is that of Cytochrome f from Gossypium hirsutum (Upland cotton).